The sequence spans 330 residues: Anthranilate phosphoribosyltransferase (330 aa).

Residues Gly-75, 78–79, Thr-83, 85–88, 103–111, and Ala-115 each bind 5-phospho-alpha-D-ribose 1-diphosphate; these read GD, NVST, and KHGNRAASS. Gly-75 lines the anthranilate pocket. Ser-87 provides a ligand contact to Mg(2+). Asn-106 lines the anthranilate pocket. Position 161 (Arg-161) interacts with anthranilate. The Mg(2+) site is built by Asp-220 and Glu-221.

The protein belongs to the anthranilate phosphoribosyltransferase family. Homodimer. Mg(2+) serves as cofactor.

The enzyme catalyses N-(5-phospho-beta-D-ribosyl)anthranilate + diphosphate = 5-phospho-alpha-D-ribose 1-diphosphate + anthranilate. The protein operates within amino-acid biosynthesis; L-tryptophan biosynthesis; L-tryptophan from chorismate: step 2/5. In terms of biological role, catalyzes the transfer of the phosphoribosyl group of 5-phosphorylribose-1-pyrophosphate (PRPP) to anthranilate to yield N-(5'-phosphoribosyl)-anthranilate (PRA). The polypeptide is Anthranilate phosphoribosyltransferase (Novosphingobium aromaticivorans (strain ATCC 700278 / DSM 12444 / CCUG 56034 / CIP 105152 / NBRC 16084 / F199)).